Reading from the N-terminus, the 430-residue chain is Histidine--tRNA ligase (430 aa).

It belongs to the class-II aminoacyl-tRNA synthetase family. In terms of assembly, homodimer.

It localises to the cytoplasm. The enzyme catalyses tRNA(His) + L-histidine + ATP = L-histidyl-tRNA(His) + AMP + diphosphate + H(+). This chain is Histidine--tRNA ligase, found in Acinetobacter baumannii (strain AB307-0294).